Here is a 90-residue protein sequence, read N- to C-terminus: Small ribosomal subunit protein uS15 (90 aa).

The protein belongs to the universal ribosomal protein uS15 family. In terms of assembly, part of the 30S ribosomal subunit. Forms a bridge to the 50S subunit in the 70S ribosome, contacting the 23S rRNA.

Functionally, one of the primary rRNA binding proteins, it binds directly to 16S rRNA where it helps nucleate assembly of the platform of the 30S subunit by binding and bridging several RNA helices of the 16S rRNA. Its function is as follows. Forms an intersubunit bridge (bridge B4) with the 23S rRNA of the 50S subunit in the ribosome. This is Small ribosomal subunit protein uS15 from Campylobacter jejuni subsp. jejuni serotype O:6 (strain 81116 / NCTC 11828).